We begin with the raw amino-acid sequence, 66 residues long: Brevinin-1DYb (66 aa).

Residues 1–22 (MFTLKKSLLLLFFLGTISLSLC) form the signal peptide. Residues 23 to 44 (EEERNAEEERRDYPEERDVEVE) constitute a propeptide that is removed on maturation. The cysteines at positions 60 and 66 are disulfide-linked.

As to expression, expressed by the skin glands.

The protein resides in the secreted. Functionally, antimicrobial peptide. Has low activity against the Gram-positive bacterium S.aureus and the Gram-negative bacterium E.coli (MIC&lt;15 uM). Has a strong hemolytic activity. This Rana dybowskii (Dybovsky's frog) protein is Brevinin-1DYb.